Consider the following 222-residue polypeptide: Protein THYLAKOID ASSEMBLY 8, chloroplastic (222 aa).

Residues 1–32 (MALSLSQTRPPSLSHSHTLSVIVPKRTFVSIR) constitute a chloroplast transit peptide. 2 PPR repeats span residues 115-149 (DLVLYADIVNALTRNKEFDEIDRLIGEIDGIDQRS) and 150-184 (DDKALAKLIRAVVGAERRESVVRVYTLMRESGWGS).

This sequence belongs to the PPR family. P subfamily.

It localises to the plastid. The protein resides in the chloroplast thylakoid membrane. In terms of biological role, essential protein required during embryogenesis. Mediates group II organellar RNA introns splicing (e.g. ycf3-2 and trnA). Binds weakly to specific RNA. Promotes the biogenesis of chloroplast thylakoid membranes. The protein is Protein THYLAKOID ASSEMBLY 8, chloroplastic of Arabidopsis thaliana (Mouse-ear cress).